Here is a 334-residue protein sequence, read N- to C-terminus: Serine/threonine-protein kinase (334 aa).

Residues 53 to 333 (FEVLQPLQSG…DEILNFGMWT (281 aa)) enclose the Protein kinase domain. ATP contacts are provided by residues 59–67 (LQSGSEGRV) and Lys-82. The active-site Proton acceptor is the Asp-167.

The protein belongs to the protein kinase superfamily. Ser/Thr protein kinase family.

It carries out the reaction L-seryl-[protein] + ATP = O-phospho-L-seryl-[protein] + ADP + H(+). The catalysed reaction is L-threonyl-[protein] + ATP = O-phospho-L-threonyl-[protein] + ADP + H(+). Its function is as follows. Able to phosphorylate in vitro the major virion phosphoprotein phosphorylated in vivo. This Sus scrofa (Pig) protein is Serine/threonine-protein kinase (PK).